A 261-amino-acid chain; its full sequence is Cytochrome c oxidase subunit 3 (261 aa).

At 1–15 (MTHQTHAYHMVNPSP) the chain is on the mitochondrial matrix side. The chain crosses the membrane as a helical span at residues 16–34 (WPLTGALSALLMTSGLAMW). Residues 35–40 (FHFNSP) are Mitochondrial intermembrane-facing. A helical transmembrane segment spans residues 41–66 (SLLLIGLVTNTLTMYQWWRDIVREGT). Over 67–72 (FQGHHT) the chain is Mitochondrial matrix. Residues 73-105 (PIVQKGLRYGMILFIISEVFFFAGFFWAFYHSS) traverse the membrane as a helical segment. Residues 106 to 128 (LAPTPELGGCWPPTGINPLNPLE) lie on the Mitochondrial intermembrane side of the membrane. A helical transmembrane segment spans residues 129–152 (VPLLNTSVLLASGVSITWAHHSLM). At 153-155 (EGN) the chain is on the mitochondrial matrix side. Residues 156–183 (RKNMQQALAITILLGIYFTLLQASEYYE) form a helical membrane-spanning segment. Topologically, residues 184 to 190 (TSFTISD) are mitochondrial intermembrane. Residues 191 to 223 (GVYGSTFFMATGFHGLHVIIGSTFLTVCLLRQF) traverse the membrane as a helical segment. Topologically, residues 224 to 232 (NFHFTSNHH) are mitochondrial matrix. Residues 233–256 (FGFEAAAWYWHFVDVVWLFLYVSI) traverse the membrane as a helical segment. Over 257–261 (YWWGS) the chain is Mitochondrial intermembrane.

The protein belongs to the cytochrome c oxidase subunit 3 family. As to quaternary structure, component of the cytochrome c oxidase (complex IV, CIV), a multisubunit enzyme composed of 14 subunits. The complex is composed of a catalytic core of 3 subunits MT-CO1, MT-CO2 and MT-CO3, encoded in the mitochondrial DNA, and 11 supernumerary subunits COX4I, COX5A, COX5B, COX6A, COX6B, COX6C, COX7A, COX7B, COX7C, COX8 and NDUFA4, which are encoded in the nuclear genome. The complex exists as a monomer or a dimer and forms supercomplexes (SCs) in the inner mitochondrial membrane with NADH-ubiquinone oxidoreductase (complex I, CI) and ubiquinol-cytochrome c oxidoreductase (cytochrome b-c1 complex, complex III, CIII), resulting in different assemblies (supercomplex SCI(1)III(2)IV(1) and megacomplex MCI(2)III(2)IV(2)).

It localises to the mitochondrion inner membrane. The enzyme catalyses 4 Fe(II)-[cytochrome c] + O2 + 8 H(+)(in) = 4 Fe(III)-[cytochrome c] + 2 H2O + 4 H(+)(out). Its function is as follows. Component of the cytochrome c oxidase, the last enzyme in the mitochondrial electron transport chain which drives oxidative phosphorylation. The respiratory chain contains 3 multisubunit complexes succinate dehydrogenase (complex II, CII), ubiquinol-cytochrome c oxidoreductase (cytochrome b-c1 complex, complex III, CIII) and cytochrome c oxidase (complex IV, CIV), that cooperate to transfer electrons derived from NADH and succinate to molecular oxygen, creating an electrochemical gradient over the inner membrane that drives transmembrane transport and the ATP synthase. Cytochrome c oxidase is the component of the respiratory chain that catalyzes the reduction of oxygen to water. Electrons originating from reduced cytochrome c in the intermembrane space (IMS) are transferred via the dinuclear copper A center (CU(A)) of subunit 2 and heme A of subunit 1 to the active site in subunit 1, a binuclear center (BNC) formed by heme A3 and copper B (CU(B)). The BNC reduces molecular oxygen to 2 water molecules using 4 electrons from cytochrome c in the IMS and 4 protons from the mitochondrial matrix. The protein is Cytochrome c oxidase subunit 3 (MT-CO3) of Oryctolagus cuniculus (Rabbit).